A 204-amino-acid chain; its full sequence is Elongation factor Ts (204 aa).

The segment at Thr87–Val90 is involved in Mg(2+) ion dislocation from EF-Tu.

It belongs to the EF-Ts family.

Its subcellular location is the cytoplasm. Functionally, associates with the EF-Tu.GDP complex and induces the exchange of GDP to GTP. It remains bound to the aminoacyl-tRNA.EF-Tu.GTP complex up to the GTP hydrolysis stage on the ribosome. This is Elongation factor Ts from Frankia casuarinae (strain DSM 45818 / CECT 9043 / HFP020203 / CcI3).